Here is an 882-residue protein sequence, read N- to C-terminus: Exo-beta-D-glucosaminidase ARB_07888 (882 aa).

Positions 1 to 21 (MWFVFRPAAIPALLLTLGVSA) are cleaved as a signal peptide. Residues 22–31 (LSPLRPLVST) constitute a propeptide that is removed on maturation. Residues Asn-86, Asn-200, Asn-234, Asn-237, Asn-287, and Asn-442 are each glycosylated (N-linked (GlcNAc...) asparagine). Residue Asp-466 is the Proton donor of the active site. Glu-538 serves as the catalytic Nucleophile. N-linked (GlcNAc...) asparagine glycosylation is found at Asn-688, Asn-773, and Asn-816.

Belongs to the glycosyl hydrolase 2 family. In terms of assembly, monomer.

It localises to the secreted. It catalyses the reaction Hydrolysis of chitosan or chitosan oligosaccharides to remove successive D-glucosamine residues from the non-reducing termini.. Functionally, hydrolyzes chitosan and chitooligosaccharides with retention of anomeric configuration. The polypeptide is Exo-beta-D-glucosaminidase ARB_07888 (Arthroderma benhamiae (strain ATCC MYA-4681 / CBS 112371) (Trichophyton mentagrophytes)).